A 463-amino-acid polypeptide reads, in one-letter code: Asparagine--tRNA ligase (463 aa).

It belongs to the class-II aminoacyl-tRNA synthetase family. In terms of assembly, homodimer.

It is found in the cytoplasm. The enzyme catalyses tRNA(Asn) + L-asparagine + ATP = L-asparaginyl-tRNA(Asn) + AMP + diphosphate + H(+). The chain is Asparagine--tRNA ligase from Bacillus thuringiensis subsp. konkukian (strain 97-27).